We begin with the raw amino-acid sequence, 170 residues long: MGVDQPLGDSFITASLDGLVNWARKSSIWPMTFGLACCAIEMMATGASHNDLDRFGIIFRASPRQADCIIIAGTVTKKMLPVIQTVYEQMPEPKWVVAMGACACSGGVFDTYSVVQGIDEALPVDVYIPGCPPRPEALLYGLIKLQDKIMKDKNSFGSTIGLGQRLESAA.

Residues Cys37, Cys38, Cys102, and Cys131 each coordinate [4Fe-4S] cluster.

It belongs to the complex I 20 kDa subunit family. In terms of assembly, NDH-1 is composed of 14 different subunits. Subunits NuoB, C, D, E, F, and G constitute the peripheral sector of the complex. [4Fe-4S] cluster is required as a cofactor.

The protein localises to the cell inner membrane. It catalyses the reaction a quinone + NADH + 5 H(+)(in) = a quinol + NAD(+) + 4 H(+)(out). NDH-1 shuttles electrons from NADH, via FMN and iron-sulfur (Fe-S) centers, to quinones in the respiratory chain. The immediate electron acceptor for the enzyme in this species is believed to be ubiquinone. Couples the redox reaction to proton translocation (for every two electrons transferred, four hydrogen ions are translocated across the cytoplasmic membrane), and thus conserves the redox energy in a proton gradient. The protein is NADH-quinone oxidoreductase subunit B of Geobacter metallireducens (strain ATCC 53774 / DSM 7210 / GS-15).